We begin with the raw amino-acid sequence, 142 residues long: Nucleoside diphosphate kinase (142 aa).

ATP is bound by residues lysine 11, phenylalanine 59, arginine 87, threonine 93, arginine 104, and asparagine 114. Histidine 117 serves as the catalytic Pros-phosphohistidine intermediate.

Belongs to the NDK family. As to quaternary structure, homotetramer. Mg(2+) serves as cofactor.

It is found in the cytoplasm. The enzyme catalyses a 2'-deoxyribonucleoside 5'-diphosphate + ATP = a 2'-deoxyribonucleoside 5'-triphosphate + ADP. It catalyses the reaction a ribonucleoside 5'-diphosphate + ATP = a ribonucleoside 5'-triphosphate + ADP. Functionally, major role in the synthesis of nucleoside triphosphates other than ATP. The ATP gamma phosphate is transferred to the NDP beta phosphate via a ping-pong mechanism, using a phosphorylated active-site intermediate. The protein is Nucleoside diphosphate kinase of Thiobacillus denitrificans (strain ATCC 25259 / T1).